Reading from the N-terminus, the 509-residue chain is Maturase K (509 aa).

It belongs to the intron maturase 2 family. MatK subfamily.

It localises to the plastid. Its subcellular location is the chloroplast. Usually encoded in the trnK tRNA gene intron. Probably assists in splicing its own and other chloroplast group II introns. This Nicotiana plumbaginifolia (Leadwort-leaved tobacco) protein is Maturase K.